A 361-amino-acid chain; its full sequence is Putative agmatine deiminase (361 aa).

The active-site Amidino-cysteine intermediate is Cys-354.

It belongs to the agmatine deiminase family.

The enzyme catalyses agmatine + H2O = N-carbamoylputrescine + NH4(+). The chain is Putative agmatine deiminase from Streptococcus pneumoniae (strain P1031).